Here is a 1758-residue protein sequence, read N- to C-terminus: RanBP2-like and GRIP domain-containing protein 3 (1758 aa).

S21 carries the phosphoserine modification. One copy of the TPR 1 repeat lies at P60–Q93. Residues R176–R229 adopt a coiled-coil conformation. The TPR 2 repeat unit spans residues Q584–I617. The interval G761–A805 is disordered. The segment covering S779–P798 has biased composition (low complexity). A coiled-coil region spans residues A805–A837. The RanBD1 1 domain maps to H1037–D1173. Disordered stretches follow at residues V1216–E1248, A1307–F1335, and N1581–S1622. Residues I1236–P1245 are compositionally biased toward polar residues. Positions T1318 to R1330 are enriched in acidic residues. A RanBD1 2 domain is found at Y1334–K1470. Polar residues predominate over residues N1581–E1594. A compositionally biased stretch (basic and acidic residues) spans S1595–V1618. A GRIP domain is found at Q1703 to V1753.

This is RanBP2-like and GRIP domain-containing protein 3 (RGPD3) from Homo sapiens (Human).